Reading from the N-terminus, the 164-residue chain is C-phycoerythrin alpha chain (164 aa).

Residues Cys82 and Cys139 each coordinate (2R,3E)-phycoerythrobilin.

This sequence belongs to the phycobiliprotein family. As to quaternary structure, heterodimer of an alpha and a beta chain. Contains two covalently linked bilin chromophores.

It is found in the cellular thylakoid membrane. Functionally, light-harvesting photosynthetic bile pigment-protein from the phycobiliprotein complex. The protein is C-phycoerythrin alpha chain (cpeA) of Microchaete diplosiphon (Fremyella diplosiphon).